A 643-amino-acid polypeptide reads, in one-letter code: Methyl-accepting chemotaxis protein McpA (643 aa).

Residues 24–44 (ILLSACGVVVLAFALFTLYND) traverse the membrane as a helical segment. Residues 49 to 273 (NTIRQNIEAS…GLPSAQWYIG (225 aa)) form the Cache domain. Residues 293–313 (IIAMLIAVAAIAGLLGLLIPV) traverse the membrane as a helical segment. The HAMP domain maps to 312–366 (PVLMSPLTTMGRAMRDIAEGEGDLTRRLAVQNKDEFGELATSFNRFVERIHASIS). The 237-residue stretch at 371-607 (ATRLVHDLSE…SLNLDITQIN (237 aa)) folds into the Methyl-accepting transducer domain.

Belongs to the methyl-accepting chemotaxis (MCP) protein family.

It is found in the cell membrane. Its function is as follows. Chemotactic-signal transducers respond to changes in the concentration of attractants and repellents in the environment, transduce a signal from the outside to the inside of the cell, and facilitate sensory adaptation through the variation of the level of methylation. McpA is a chemoreceptor that binds to 12 different L-amino acids and mediates chemotaxis toward these amino acids. The sequence is that of Methyl-accepting chemotaxis protein McpA from Pseudomonas putida (strain ATCC 47054 / DSM 6125 / CFBP 8728 / NCIMB 11950 / KT2440).